Here is a 937-residue protein sequence, read N- to C-terminus: FNIP repeat-containing protein DDB_G0271996 (937 aa).

Residues 1-12 (MQQPISIQQPVV) show a composition bias toward polar residues. Residues 1–60 (MQQPISIQQPVVNNINNSPNNQANINNNTTNNTNNNNNNNNTTNNIANNNNSNNINNNNE) form a disordered region. Over residues 13–60 (NNINNSPNNQANINNNTTNNTNNNNNNNNTTNNIANNNNSNNINNNNE) the composition is skewed to low complexity. FNIP repeat units lie at residues 307–350 (FNQP…LGQR), 354–394 (PIPI…TLDN), 396–439 (FNQP…FHQN), and 598–640 (YNHQ…RVKS). A coiled-coil region spans residues 677–769 (VEQQAQYAQQ…EEEDTNNHQH (93 aa)). Positions 719-729 (KQQQQQQQDNE) are enriched in low complexity. 3 disordered regions span residues 719–767 (KQQQ…TNNH), 794–823 (SNNSNNYNYNNNSNNNNNNNSNEEDDEEED), and 910–937 (QNQNNNNYNNNNNNNNNNNNNKKKNVKK). Over residues 751–763 (LEEEQENEEEEED) the composition is skewed to acidic residues. Composition is skewed to low complexity over residues 794-814 (SNNSNNYNYNNNSNNNNNNNS) and 910-929 (QNQNNNNYNNNNNNNNNNNN). Residues 902 to 937 (ICNNINQNQNQNNNNYNNNNNNNNNNNNNKKKNVKK) are a coiled coil.

This chain is FNIP repeat-containing protein DDB_G0271996, found in Dictyostelium discoideum (Social amoeba).